A 299-amino-acid polypeptide reads, in one-letter code: GTPase Era (299 aa).

One can recognise an Era-type G domain in the interval 5–172 (KSGFVSIIGR…IDVLKSFLPE (168 aa)). The interval 13-20 (GRPNVGKS) is G1. A GTP-binding site is contributed by 13-20 (GRPNVGKS). Residues 39-43 (QTTRN) are G2. Positions 60-63 (DTPG) are G3. Residues 60-64 (DTPGI) and 122-125 (NKID) each bind GTP. The G4 stretch occupies residues 122–125 (NKID). The tract at residues 151 to 153 (ISA) is G5. Residues 203–280 (TSEEIPHAIG…YLELWVKVQR (78 aa)) enclose the KH type-2 domain.

This sequence belongs to the TRAFAC class TrmE-Era-EngA-EngB-Septin-like GTPase superfamily. Era GTPase family. As to quaternary structure, monomer.

The protein localises to the cytoplasm. The protein resides in the cell membrane. In terms of biological role, an essential GTPase that binds both GDP and GTP, with rapid nucleotide exchange. Plays a role in 16S rRNA processing and 30S ribosomal subunit biogenesis and possibly also in cell cycle regulation and energy metabolism. The polypeptide is GTPase Era (Staphylococcus epidermidis (strain ATCC 35984 / DSM 28319 / BCRC 17069 / CCUG 31568 / BM 3577 / RP62A)).